A 106-amino-acid chain; its full sequence is Putative membrane protein insertion efficiency factor (106 aa).

Belongs to the UPF0161 family.

The protein resides in the cell inner membrane. Its function is as follows. Could be involved in insertion of integral membrane proteins into the membrane. This is Putative membrane protein insertion efficiency factor from Acinetobacter baumannii (strain AB307-0294).